The sequence spans 497 residues: Hexokinase-1 (497 aa).

The chain crosses the membrane as a helical span at residues Ala4–Val24. The 453-residue stretch at Ala35–Ala487 folds into the Hexokinase domain. Positions Thr90 to Val228 are hexokinase small subdomain. The ADP site is built by Gly104, Thr105, and Asn106. D-glucose contacts are provided by Thr194, Lys195, Asn229, and Asp230. The hexokinase large subdomain stretch occupies residues Asn229–Asp476. Thr253 is an ADP binding site. D-glucose-binding residues include Asn256, Glu284, and Glu315. Residue Gly441 coordinates ADP.

This sequence belongs to the hexokinase family.

It is found in the plastid. The protein localises to the chloroplast outer membrane. The catalysed reaction is a D-hexose + ATP = a D-hexose 6-phosphate + ADP + H(+). It catalyses the reaction D-fructose + ATP = D-fructose 6-phosphate + ADP + H(+). It carries out the reaction D-glucose + ATP = D-glucose 6-phosphate + ADP + H(+). It functions in the pathway carbohydrate metabolism; hexose metabolism. Its pathway is carbohydrate degradation; glycolysis; D-glyceraldehyde 3-phosphate and glycerone phosphate from D-glucose: step 1/4. Functionally, fructose and glucose phosphorylating enzyme. This is Hexokinase-1 (HXK1) from Nicotiana tabacum (Common tobacco).